The following is a 188-amino-acid chain: UPF0301 protein azo3459 (188 aa).

It belongs to the UPF0301 (AlgH) family.

The sequence is that of UPF0301 protein azo3459 from Azoarcus sp. (strain BH72).